We begin with the raw amino-acid sequence, 552 residues long: 3-hydroxy-3-methylglutaryl-coenzyme A reductase 1 (552 aa).

Low complexity-rich tracts occupy residues 79 to 99 and 112 to 122; these read QHNQQQQQKQQPSQDYIQQPQ and QQQQQQQQQQQ. The interval 79–138 is disordered; it reads QHNQQQQQKQQPSQDYIQQPQNDNNINSGKEQEQQQQQQQQQQQTPDITNQPTKTNKKIP. Residues 123 to 132 are compositionally biased toward polar residues; the sequence is TPDITNQPTK. Residue E237 is the Charge relay system of the active site. N-linked (GlcNAc...) asparagine glycosylation is present at N288. The active-site Charge relay system is K369. The N-linked (GlcNAc...) asparagine glycan is linked to N375. The active-site Charge relay system is the D445. Catalysis depends on H543, which acts as the Proton donor.

Belongs to the HMG-CoA reductase family.

Its subcellular location is the endoplasmic reticulum membrane. It catalyses the reaction (R)-mevalonate + 2 NADP(+) + CoA = (3S)-3-hydroxy-3-methylglutaryl-CoA + 2 NADPH + 2 H(+). It participates in metabolic intermediate biosynthesis; (R)-mevalonate biosynthesis; (R)-mevalonate from acetyl-CoA: step 3/3. This transmembrane glycoprotein is involved in the control of cholesterol biosynthesis. It is the rate-limiting enzyme of the sterol biosynthesis. The protein is 3-hydroxy-3-methylglutaryl-coenzyme A reductase 1 (hmgA) of Dictyostelium discoideum (Social amoeba).